Here is a 150-residue protein sequence, read N- to C-terminus: Large ribosomal subunit protein bL9 (150 aa).

The protein belongs to the bacterial ribosomal protein bL9 family.

Its function is as follows. Binds to the 23S rRNA. The chain is Large ribosomal subunit protein bL9 from Neisseria meningitidis serogroup B (strain ATCC BAA-335 / MC58).